Here is a 66-residue protein sequence, read N- to C-terminus: Muscarinic toxin 4 (66 aa).

Intrachain disulfides connect Cys-3–Cys-24, Cys-17–Cys-42, Cys-46–Cys-58, and Cys-59–Cys-64.

The protein belongs to the three-finger toxin family. Short-chain subfamily. Aminergic toxin sub-subfamily. Monomer. Expressed by the venom gland.

It localises to the secreted. Binds to the muscarinic acetylcholine receptor (CHRM). The protein is Muscarinic toxin 4 of Dendroaspis angusticeps (Eastern green mamba).